The chain runs to 286 residues: ATP synthase gamma chain (286 aa).

This sequence belongs to the ATPase gamma chain family. As to quaternary structure, F-type ATPases have 2 components, CF(1) - the catalytic core - and CF(0) - the membrane proton channel. CF(1) has five subunits: alpha(3), beta(3), gamma(1), delta(1), epsilon(1). CF(0) has three main subunits: a, b and c.

It localises to the cell inner membrane. Functionally, produces ATP from ADP in the presence of a proton gradient across the membrane. The gamma chain is believed to be important in regulating ATPase activity and the flow of protons through the CF(0) complex. The sequence is that of ATP synthase gamma chain from Christiangramia forsetii (strain DSM 17595 / CGMCC 1.15422 / KT0803) (Gramella forsetii).